The following is a 463-amino-acid chain: Xanthone prenyltransferase B (463 aa).

The protein belongs to the tryptophan dimethylallyltransferase family.

The protein operates within secondary metabolite biosynthesis. Its activity is regulated as follows. Mn(2+) and Co(2+) strongly enhance prenylation activity. Functionally, dehydrogenase involved in the conversion of monodictyphenone to the prenyl xanthones such as emericellin, shamixanthone and epishamixanthone. Monodictyphenone is first converted to variecoxanthone A via a paeciloxanthone intermediate by the consecutive actions of the FAD-dependent monooxygenase mdpD and the xanthone prenyltransferase xptB. XptB catalyzes regular O-prenylation at the hydroxy group of C-7 of the xanthone ring. Variecoxanthone A is further prenylated to emericellin by xptA before being reduced to shamixanthone and epishamixanthone by the dehydrogenase xptC. The polypeptide is Xanthone prenyltransferase B (Emericella nidulans (strain FGSC A4 / ATCC 38163 / CBS 112.46 / NRRL 194 / M139) (Aspergillus nidulans)).